Consider the following 22-residue polypeptide: Protein YncP (22 aa).

This chain is Protein YncP, found in Escherichia coli (strain K12).